The chain runs to 157 residues: Small ribosomal subunit protein bS16 (157 aa).

Over residues 125–141 (KRKAAKKAAEEAAAKEA) the composition is skewed to basic and acidic residues. Positions 125 to 157 (KRKAAKKAAEEAAAKEAEAEEAAEDKAEEESAE) are disordered. The segment covering 142–157 (EAEEAAEDKAEEESAE) has biased composition (acidic residues).

Belongs to the bacterial ribosomal protein bS16 family.

The protein is Small ribosomal subunit protein bS16 of Corynebacterium kroppenstedtii (strain DSM 44385 / JCM 11950 / CIP 105744 / CCUG 35717).